The chain runs to 206 residues: Protein GrpE (206 aa).

Residues 1–15 (MTDSNGQKDNNQDQA) show a composition bias toward polar residues. The tract at residues 1 to 38 (MTDSNGQKDNNQDQAQPADPVVSKPYIMPDDPEEGTNE) is disordered.

This sequence belongs to the GrpE family. In terms of assembly, homodimer.

The protein resides in the cytoplasm. Functionally, participates actively in the response to hyperosmotic and heat shock by preventing the aggregation of stress-denatured proteins, in association with DnaK and GrpE. It is the nucleotide exchange factor for DnaK and may function as a thermosensor. Unfolded proteins bind initially to DnaJ; upon interaction with the DnaJ-bound protein, DnaK hydrolyzes its bound ATP, resulting in the formation of a stable complex. GrpE releases ADP from DnaK; ATP binding to DnaK triggers the release of the substrate protein, thus completing the reaction cycle. Several rounds of ATP-dependent interactions between DnaJ, DnaK and GrpE are required for fully efficient folding. This Rhodopseudomonas palustris (strain BisB5) protein is Protein GrpE.